The sequence spans 245 residues: ATP synthase subunit a (245 aa).

7 helical membrane-spanning segments follow: residues 5–25 (LWFTAFLNQYLAGPVSAMMSV), 37–57 (ISNYVAMEILVFLLLVLFFIA), 99–119 (YIVTLGVFILSMNLIGLIPGF), 125–145 (FPSVPLGCALVTWFFYHVHGL), 157–177 (FLGPVWWISPLLFVIEICSHF), 187–209 (LYANMFAGDMVTLAFFSLVPLGF), and 221–241 (SLIQTYIFITLAAVYLAEATA).

It belongs to the ATPase A chain family. As to quaternary structure, F-type ATPases have 2 components, CF(1) - the catalytic core - and CF(0) - the membrane proton channel. CF(1) has five subunits: alpha(3), beta(3), gamma(1), delta(1), epsilon(1). CF(0) has three main subunits: a(1), b(2) and c(9-12). The alpha and beta chains form an alternating ring which encloses part of the gamma chain. CF(1) is attached to CF(0) by a central stalk formed by the gamma and epsilon chains, while a peripheral stalk is formed by the delta and b chains.

The protein localises to the cell inner membrane. In terms of biological role, key component of the proton channel; it plays a direct role in the translocation of protons across the membrane. This Koribacter versatilis (strain Ellin345) protein is ATP synthase subunit a.